Consider the following 42-residue polypeptide: GHVPCGKDGRKCGYHADCCNCCLSGICKPSTSWTGCSTSTFD.

Disulfide bonds link Cys-5/Cys-19, Cys-12/Cys-22, Cys-18/Cys-27, and Cys-21/Cys-36.

This sequence belongs to the conotoxin I1 superfamily. Expressed by the venom duct.

It localises to the secreted. Its function is as follows. Iota-conotoxins bind to voltage-gated sodium channels (Nav) and act as agonists by shifting the voltage-dependence of activation to more hyperpolarized levels. Produces general excitatory symptoms. The sequence is that of Iota-conotoxin-like R11.1 from Conus radiatus (Rayed cone).